The sequence spans 213 residues: Hemolysin-3 homolog (213 aa).

The next 7 membrane-spanning stretches (helical) occupy residues 11-31 (AITH…LIIF), 41-61 (IVSF…STLL), 75-95 (IIDH…FLLG), 103-123 (FTLL…KIFF), 127-147 (FILL…IAVK), 157-177 (GFSL…FYIW), and 185-205 (AIWH…VLFY).

The protein belongs to the UPF0073 (Hly-III) family.

Its subcellular location is the cell membrane. This chain is Hemolysin-3 homolog (yplQ), found in Bacillus subtilis (strain 168).